A 519-amino-acid polypeptide reads, in one-letter code: Dihydropyrimidinase (519 aa).

His67 and His69 together coordinate Zn(2+). Position 79 is a phosphoserine (Ser79). Position 159 (Lys159) interacts with Zn(2+). The residue at position 159 (Lys159) is an N6-carboxylysine. Tyr164 provides a ligand contact to substrate. The Zn(2+) site is built by His192 and His248. Lys256 carries the post-translational modification N6-succinyllysine. Residue Asp326 participates in Zn(2+) binding. A substrate-binding site is contributed by Asn347. Thr510 carries the phosphothreonine modification.

Belongs to the metallo-dependent hydrolases superfamily. Hydantoinase/dihydropyrimidinase family. As to quaternary structure, homotetramer. It depends on Zn(2+) as a cofactor. In terms of processing, carboxylation allows a single lysine to coordinate two zinc ions.

The catalysed reaction is 5,6-dihydrouracil + H2O = 3-(carbamoylamino)propanoate + H(+). Catalyzes the second step of the reductive pyrimidine degradation, the reversible hydrolytic ring opening of dihydropyrimidines. Can catalyze the ring opening of 5,6-dihydrouracil to N-carbamyl-alanine and of 5,6-dihydrothymine to N-carbamyl-amino isobutyrate. This chain is Dihydropyrimidinase (Dpys), found in Rattus norvegicus (Rat).